Consider the following 244-residue polypeptide: Carboxy-S-adenosyl-L-methionine synthase (244 aa).

S-adenosyl-L-methionine contacts are provided by residues tyrosine 40, glycine 65–serine 67, aspartate 90–asparagine 91, aspartate 119–isoleucine 120, asparagine 134, and arginine 201.

Belongs to the class I-like SAM-binding methyltransferase superfamily. Cx-SAM synthase family. Homodimer.

The enzyme catalyses prephenate + S-adenosyl-L-methionine = carboxy-S-adenosyl-L-methionine + 3-phenylpyruvate + H2O. Catalyzes the conversion of S-adenosyl-L-methionine (SAM) to carboxy-S-adenosyl-L-methionine (Cx-SAM). This chain is Carboxy-S-adenosyl-L-methionine synthase, found in Geobacter sp. (strain M21).